Here is a 104-residue protein sequence, read N- to C-terminus: MTLEKIKKYLISKINIKFIEIYDDSQFHHYSKKGLTHLRIIIISDDFINQTLINRHRIIFSMLSKMIEKKIYSLTLNTYTLNEWKDKKLKKTSNVKCVKKNNIL.

This sequence belongs to the BolA/IbaG family.

This is an uncharacterized protein from Buchnera aphidicola subsp. Acyrthosiphon pisum (strain APS) (Acyrthosiphon pisum symbiotic bacterium).